The primary structure comprises 376 residues: Succinyl-diaminopimelate desuccinylase (376 aa).

His67 provides a ligand contact to Zn(2+). Asp69 is an active-site residue. Asp100 is a Zn(2+) binding site. Glu134 serves as the catalytic Proton acceptor. Glu135, Glu163, and His349 together coordinate Zn(2+).

Belongs to the peptidase M20A family. DapE subfamily. Homodimer. Requires Zn(2+) as cofactor. The cofactor is Co(2+).

The catalysed reaction is N-succinyl-(2S,6S)-2,6-diaminopimelate + H2O = (2S,6S)-2,6-diaminopimelate + succinate. It functions in the pathway amino-acid biosynthesis; L-lysine biosynthesis via DAP pathway; LL-2,6-diaminopimelate from (S)-tetrahydrodipicolinate (succinylase route): step 3/3. Functionally, catalyzes the hydrolysis of N-succinyl-L,L-diaminopimelic acid (SDAP), forming succinate and LL-2,6-diaminopimelate (DAP), an intermediate involved in the bacterial biosynthesis of lysine and meso-diaminopimelic acid, an essential component of bacterial cell walls. In Pseudoalteromonas atlantica (strain T6c / ATCC BAA-1087), this protein is Succinyl-diaminopimelate desuccinylase.